We begin with the raw amino-acid sequence, 61 residues long: Metallothionein-1B (61 aa).

The tract at residues 1 to 29 (MDPNCSCTTGGSCACAGSCKCKECKCTSC) is beta. Residues Cys5, Cys7, Cys13, Cys15, Cys19, Cys21, Cys24, Cys26, Cys29, Cys33, Cys34, Cys36, Cys37, Cys41, Cys44, Cys48, Cys50, Cys57, Cys59, and Cys60 each contribute to the a divalent metal cation site. An alpha region spans residues 30–61 (KKCCCSCCPVGCAKCAQGCVCKGSSEKCRCCA).

The protein belongs to the metallothionein superfamily. Type 1 family. Monomer.

Metallothioneins have a high content of cysteine residues that bind various heavy metals; these proteins are transcriptionally regulated by both heavy metals and glucocorticoids. This is Metallothionein-1B (MT1B) from Homo sapiens (Human).